Consider the following 435-residue polypeptide: Chaperone SurA (435 aa).

The N-terminal stretch at 1–24 (MRLRSFAFLGFMLLVAMAPSMASA) is a signal peptide. PpiC domains follow at residues 173 to 274 (DTAY…KLID) and 286 to 385 (VTEN…ELED).

The protein resides in the periplasm. It carries out the reaction [protein]-peptidylproline (omega=180) = [protein]-peptidylproline (omega=0). Functionally, chaperone involved in the correct folding and assembly of outer membrane proteins. Recognizes specific patterns of aromatic residues and the orientation of their side chains, which are found more frequently in integral outer membrane proteins. May act in both early periplasmic and late outer membrane-associated steps of protein maturation. The polypeptide is Chaperone SurA (Chromohalobacter salexigens (strain ATCC BAA-138 / DSM 3043 / CIP 106854 / NCIMB 13768 / 1H11)).